The primary structure comprises 208 residues: Small ribosomal subunit protein uS4 (208 aa).

The S4 RNA-binding domain occupies 98–163 (TRLDNVVFRL…TPLFKEIVDG (66 aa)).

It belongs to the universal ribosomal protein uS4 family. Part of the 30S ribosomal subunit. Contacts protein S5. The interaction surface between S4 and S5 is involved in control of translational fidelity.

Its function is as follows. One of the primary rRNA binding proteins, it binds directly to 16S rRNA where it nucleates assembly of the body of the 30S subunit. Functionally, with S5 and S12 plays an important role in translational accuracy. This is Small ribosomal subunit protein uS4 from Heliobacterium modesticaldum (strain ATCC 51547 / Ice1).